Here is a 155-residue protein sequence, read N- to C-terminus: MSRQSTVEKKIEKFDPIYHNRLVNMVVNRILKHGKKSLAYRIFYQSLKKIQQKTEKNPLIVLRQAIQKLTPKLIVKSRRVSGSTYQVPIEIKKKEGKILAIRWLLESSRKRSGRNMHFKLSYEIMDAAREKGNAIRKKEEIHKMAESNKAFAHYH.

This sequence belongs to the universal ribosomal protein uS7 family. Part of the 30S ribosomal subunit.

The protein resides in the plastid. It is found in the chloroplast. One of the primary rRNA binding proteins, it binds directly to 16S rRNA where it nucleates assembly of the head domain of the 30S subunit. In Cryptomeria japonica (Japanese cedar), this protein is Small ribosomal subunit protein uS7c (rps7).